A 187-amino-acid polypeptide reads, in one-letter code: Ribosome-recycling factor (187 aa).

This sequence belongs to the RRF family.

It localises to the cytoplasm. Responsible for the release of ribosomes from messenger RNA at the termination of protein biosynthesis. May increase the efficiency of translation by recycling ribosomes from one round of translation to another. The polypeptide is Ribosome-recycling factor (Nitrobacter winogradskyi (strain ATCC 25391 / DSM 10237 / CIP 104748 / NCIMB 11846 / Nb-255)).